Consider the following 216-residue polypeptide: Probable nicotinate-nucleotide adenylyltransferase (216 aa).

The protein belongs to the NadD family.

The enzyme catalyses nicotinate beta-D-ribonucleotide + ATP + H(+) = deamido-NAD(+) + diphosphate. It participates in cofactor biosynthesis; NAD(+) biosynthesis; deamido-NAD(+) from nicotinate D-ribonucleotide: step 1/1. Its function is as follows. Catalyzes the reversible adenylation of nicotinate mononucleotide (NaMN) to nicotinic acid adenine dinucleotide (NaAD). The protein is Probable nicotinate-nucleotide adenylyltransferase of Pelobacter propionicus (strain DSM 2379 / NBRC 103807 / OttBd1).